We begin with the raw amino-acid sequence, 560 residues long: MADSKSGDTEVAHRSSDPSEKRGGWITLPFMLVTLLGMSITSFGWGMNLIVFLIEEFHIKNIAAAQISNVVNGVVNMLPVVAAILADSFFGNIPVISTSTFISLAGTSLLTLITSLNYLMPRPCETGSILCQSPSKLQLGILYVALALVIIGSAGTRFTLAAAGANQYKKPKEQGRFFNWFFLALYIGAITGTTAIVYTQDNASWKLGFGLCAVANLISFIVFIAGVRFYKHDKPLGSPYTSLIRVLVAATMKRKAVISSKDEDYHQYGLGKEAKTYTTMPSKSFRFLNRAALKNKEDLNTSGDSSNNMWRLCSVQEVEDFKAILRLVPLWAAVMFLSTPVAVQMSMTVLQALVMDRKLSPHFEVSAGSLQVIVLVFGCVFIMLNNWIIYPMYQKLIGKPLTPLQQVGIGHVFTILSMAISAVVEAKRLKTVENGGHPMSVLWLVPALVMVGIGEAFHFPANVAVFYGEFPESLKNTATSLTSVVIGISFYLSTAVIDVIQRTTSWLPNDINHGRVDNVYWVVVIGGVLNLGYFLVCSWFYKYRNLKDDDHEQDPKDVKT.

The interval 1–20 (MADSKSGDTEVAHRSSDPSE) is disordered. 12 helical membrane-spanning segments follow: residues 34-54 (TLLG…VFLI), 77-97 (MLPV…PVIS), 101-121 (FISL…YLMP), 141-161 (ILYV…FTLA), 177-197 (FFNW…TAIV), 207-227 (LGFG…IAGV), 323-343 (AILR…PVAV), 372-392 (VIVL…IYPM), 404-424 (LQQV…SAVV), 441-461 (VLWL…HFPA), 480-500 (SLTS…IDVI), and 520-540 (YWVV…CSWF).

It belongs to the major facilitator superfamily. Proton-dependent oligopeptide transporter (POT/PTR) (TC 2.A.17) family. As to expression, expressed in the root epidermis or cortex.

The protein resides in the membrane. Functionally, transporter involved in a passive nitrate efflux. The protein is Protein NRT1/ PTR FAMILY 2.5 (NPF2.5) of Arabidopsis thaliana (Mouse-ear cress).